Here is a 214-residue protein sequence, read N- to C-terminus: Phosphatidylcholine transfer protein (214 aa).

M1 is subject to N-acetylmethionine. The region spanning M1 to K212 is the START domain. A 1,2-diacyl-sn-glycero-3-phosphocholine is bound by residues Y72 and R78. S139 is subject to Phosphoserine. Q157 contacts a 1,2-diacyl-sn-glycero-3-phosphocholine.

Interacts with ACOT13/THEM2. As to expression, abundant in liver of pups but levels in liver decrease 10-fold about 2 weeks after birth. In adult, highly expressed in epididymis, testis, kidney and bone-marrow derived mast cells.

The protein localises to the cytoplasm. Catalyzes the transfer of phosphatidylcholine between membranes. Binds a single lipid molecule. This Mus musculus (Mouse) protein is Phosphatidylcholine transfer protein (Pctp).